We begin with the raw amino-acid sequence, 1364 residues long: Kinectin (1364 aa).

The Cytoplasmic portion of the chain corresponds to 1 to 6 (MEFYES). The helical; Signal-anchor for type II membrane protein transmembrane segment at 7–29 (TYFIILIPSVVITVIFLFFWLFM) threads the bilayer. The Lumenal segment spans residues 30–1364 (KETLYDEVLA…KGREHYQLVE (1335 aa)). 4 stretches are compositionally biased toward basic and acidic residues: residues 46-56 (KFPPTKSDKKK), 73-86 (HESDSESTPRDFKL), 121-135 (QKAAQDDHVTKESEG), and 170-179 (QKNDDQDTKT). Residues 46–207 (KFPPTKSDKK…VKQENVSGKK (162 aa)) are disordered. 10 N-linked (GlcNAc...) asparagine glycosylation sites follow: Asn202, Asn267, Asn623, Asn638, Asn704, Asn775, Asn976, Asn1061, Asn1088, and Asn1094. Positions 315–1085 (KASKAESAAA…VETRELLQKL (771 aa)) form a coiled coil. Residues 1116-1306 (SGSEDIKVME…ASLEREIGKV (191 aa)) are a coiled coil.

This sequence belongs to the kinectin family. Parallel homodimers formed between the membrane-bound and the cytosolic form, and also between 2 cytosolic forms. In terms of processing, both the membrane and cytoplasmic forms seem to be myristoylated.

The protein resides in the endoplasmic reticulum membrane. Receptor for kinesin thus involved in kinesin-driven vesicle motility. This is Kinectin (KTN1) from Gallus gallus (Chicken).